Reading from the N-terminus, the 892-residue chain is MLSAKILQSSGFHRKQCPLCKSYFWTRRADQIYCGDQPCVPYGFIGNPPARASVESLADLRERFLRFFERNSHVRIRRYPVVARWRDDVYLVGASIYDFQPWVTSGAVPPPANPLAISQPSIRLTDVDKVGRSGRHLTGFEMMAHHAFNYPDKYVYWIDETTQYAYEFFTRELGIPPDEITFKESMWEGGGNAGECFEVLIRGLEVATLVFMHYEVKDGRYVELPLKIVDTGYGLERIYWLLKGTPTVYDAVFGPYLAKARQRLGVPEPPAEVMGKASVYFGQMDPEVIGLEKAYDIIAEKIGVDPKWLREVVRPQEALYVLADHSRTVSWMIADGVIPSNTGAGYLARLLIRRILKNLRLAGVDAPLVELFDMHLAELKREYPEVWEARGLILELVDMEERRYREVLKSAPAAVKKALEEARRRGRAGLDADDLVALYDSQGIPPEVAAEVAKSLGTEVKVPDDFYAKLAARHVKREKKPESSPVEMGKVADLPRTRELFYEDSYMRSFKARVLRVIDGRYVVLDQTAFYPEGGGQPADRGVLKFQGGEAKVVDVQRVGHVVVHVVEGQPPPEGAEVVGEVDWERRYSLMKMHTGTHVLIQSIRRVLGSHIWQAGAQKDIPSSRIDVTHHRLPTAEEVARIEELANRAVQADLPVYAKIMPRNEAEAKYGFVLYQGGVVPAREIRVLQIGPDEQPYDVQACGGTHLRSTGEIGLIKIQKVERIADGVVRFVFTTGMHALAYVQELERRAAEAASIAGGSRDELVEAVRRLAQRAEEADRRARRYAELYAAALAENLKAEQVGRHRLAVVELDDEELARKIALAATSRDRDLVLVFVGGGRATVYTGGVDVAPIVKALREVGFRGGGSKTFAQGQYKGDIQTLKEAIRRALA.

Residues His-594, His-598, Cys-702, and His-706 each contribute to the Zn(2+) site.

Belongs to the class-II aminoacyl-tRNA synthetase family. Zn(2+) serves as cofactor.

It localises to the cytoplasm. It catalyses the reaction tRNA(Ala) + L-alanine + ATP = L-alanyl-tRNA(Ala) + AMP + diphosphate. Catalyzes the attachment of alanine to tRNA(Ala) in a two-step reaction: alanine is first activated by ATP to form Ala-AMP and then transferred to the acceptor end of tRNA(Ala). Also edits incorrectly charged Ser-tRNA(Ala) and Gly-tRNA(Ala) via its editing domain. This Pyrobaculum neutrophilum (strain DSM 2338 / JCM 9278 / NBRC 100436 / V24Sta) (Thermoproteus neutrophilus) protein is Alanine--tRNA ligase.